A 130-amino-acid polypeptide reads, in one-letter code: Ribosome-binding factor A (130 aa).

Belongs to the RbfA family. As to quaternary structure, monomer. Binds 30S ribosomal subunits, but not 50S ribosomal subunits or 70S ribosomes.

The protein localises to the cytoplasm. Its function is as follows. One of several proteins that assist in the late maturation steps of the functional core of the 30S ribosomal subunit. Associates with free 30S ribosomal subunits (but not with 30S subunits that are part of 70S ribosomes or polysomes). Required for efficient processing of 16S rRNA. May interact with the 5'-terminal helix region of 16S rRNA. The protein is Ribosome-binding factor A of Prochlorococcus marinus (strain SARG / CCMP1375 / SS120).